Here is a 246-residue protein sequence, read N- to C-terminus: Myelin-oligodendrocyte glycoprotein (246 aa).

An N-terminal signal peptide occupies residues 1–28 (MACLWSFSWPSCFLSLLLLLLQLSCSYA). Residues 29–156 (GQFRVIGPGY…FYWVNPGVLT (128 aa)) lie on the Extracellular side of the membrane. The Ig-like V-type domain maps to 31–144 (FRVIGPGYPI…EEAAMELKVE (114 aa)). C52 and C126 are disulfide-bonded. N59 carries N-linked (GlcNAc...) asparagine glycosylation. Residues 157–177 (LIALVPTILLQVPVGLVFLFL) traverse the membrane as a helical segment. The Cytoplasmic portion of the chain corresponds to 178 to 209 (QHRLRGKLRAEVENLHRTFDPHFLRVPCWKIT). The helical transmembrane segment at 210–230 (LFVIVPVLGPLVALIICYNWL) threads the bilayer. At 231–246 (HRRLAGQFLEELRNPF) the chain is on the extracellular side.

It belongs to the immunoglobulin superfamily. BTN/MOG family. As to quaternary structure, homodimer. Found exclusively in the CNS, where it is localized on the surface of myelin and oligodendrocyte cytoplasmic membranes. Reduced expression levels are observed in jimpy and quacking dysmyelinating mutant mice.

The protein resides in the membrane. Functionally, minor component of the myelin sheath. May be involved in completion and/or maintenance of the myelin sheath and in cell-cell communication. Mediates homophilic cell-cell adhesion. The protein is Myelin-oligodendrocyte glycoprotein (Mog) of Mus musculus (Mouse).